Here is a 567-residue protein sequence, read N- to C-terminus: R-linalool synthase QH1, chloroplastic (567 aa).

Residues Gly1 to Ala24 constitute a chloroplast transit peptide. Residues Arg282, Asp319, Asp323, Arg460, and Asp463 each coordinate (2E)-geranyl diphosphate. Residues Asp319 and Asp323 each contribute to the Mg(2+) site. Residues Asp319 to Asp323 carry the DDXXD motif motif. Mg(2+) is bound by residues Asp463, Thr467, and Glu471.

This sequence belongs to the terpene synthase family. Tpsb subfamily. It depends on Mg(2+) as a cofactor. In terms of tissue distribution, highly expressed in leaves and lower levels in inflorescences. Not detected in stems, stem epidermis, stem stele or roots.

Its subcellular location is the plastid. It localises to the chloroplast. The catalysed reaction is (2E)-geranyl diphosphate + H2O = (R)-linalool + diphosphate. The protein operates within secondary metabolite biosynthesis; terpenoid biosynthesis. In terms of biological role, monoterpene synthase that catalyzes the formation of (3R)-linalool from geranyl diphosphate, but not from isopentenyl diphosphate, dimethylallyl diphosphate, chrysanthemyl diphosphate, farnesyl diphosphate, (+)-copalyl diphosphate or geranylgeranyl diphosphate. The chain is R-linalool synthase QH1, chloroplastic (QH1) from Artemisia annua (Sweet wormwood).